The primary structure comprises 562 residues: uncharacterized protein (562 aa).

A run of 5 helical transmembrane segments spans residues 4–26 (VRWIISTAPEIFLLLAVAIGTML), 33–55 (GFAIGTTACILIVSVLIGQLGTF), 59–78 (ALLRIVLFSLFVFTIGYKSG), 90–112 (LAQVAMALVLGGTGLVIVLAFAF), and 159–181 (IAAGYAVTYVLGYILTLLYVPFA). RCK C-terminal domains are found at residues 207–287 (PKTE…IIGT) and 295–375 (LKAI…QVGQ). 6 consecutive transmembrane segments (helical) span residues 385-402 (IAFLAAGIAAGLLAGLVS), 406-428 (GGIALTLGGGGGALIAGLLCGWL), 449-471 (LGLGGFIAAIGLANGHAAWVAIQ), 476-498 (LLVGMGLVVTLVPLVVATLFAYH), 505-524 (VITCGALAGAMTVDAAVTGA), and 539-561 (VPYAVGNVVLTVLGPIIVACTFV).

It belongs to the AAE transporter (TC 2.A.81) family.

It localises to the cell membrane. This is an uncharacterized protein from Bradyrhizobium diazoefficiens (strain JCM 10833 / BCRC 13528 / IAM 13628 / NBRC 14792 / USDA 110).